Consider the following 89-residue polypeptide: Small ribosomal subunit protein uS17 (89 aa).

Belongs to the universal ribosomal protein uS17 family. Part of the 30S ribosomal subunit.

One of the primary rRNA binding proteins, it binds specifically to the 5'-end of 16S ribosomal RNA. The sequence is that of Small ribosomal subunit protein uS17 from Lactiplantibacillus plantarum (strain ATCC BAA-793 / NCIMB 8826 / WCFS1) (Lactobacillus plantarum).